Here is a 2027-residue protein sequence, read N- to C-terminus: MWTPTEEEKYGVVICSFRGSVPQGLVLEIGETVQILEKCEGWYRGVSTKKPNVKGLFPANYIHLKKAIVSNRGQYETVVPLEDSIVTEVTTTLQEWASLWKQLYVKHKVDLFYKLRHVMNELIDLRRQLLSGHLTQDQVREVKRHITVRLDWGNEHLGLDLVPRKDFEVVDSDQISVSDLYKMHLSSRQSVQQSTSQVDTMRPRHGETCRMPVPYHFFFSLKSFTYNTIGEDSDVFFSLYDMREGKQISERFLVRLNKNGGPRNPEKIERMCALFTDLSSKDMKRDLYIVAHVIRIGRMLLNDSKKGPAHLHYRRPYGCAVLSILDVLQSLTELKEEKDFVLKVYTCNNESEWTQIHENIIRKSSTKYSAPSASHGLIISLQLFRGDMEQIRRENPMIFNRGLAITRKLGFPDVIMPGDIRNDLYLTLEKGDFERGGKSVQKNIEVTMYVLYADGEILKDCISLGSGEPNRSSYHSFVLYHSNSPRWGEIIKLPIPIDRFRGSHLRFEFRHCSTKDKGEKKLFGFAFSPLMRDDGTTLSDDIHELYVYKCDENSTFNNHALYLGLPCCKEDYNGCPNIPSSLIFQRSKESFFISTQLSSTKLTQNVDLLALLKWKAFPDRIMDILGRLRHVSGEEIVKFLQDILDTLFVILDDNTEKYGLLVFQSLVFIINLLRDIKYFHFRPVMDTYIQKHFAGALAYKELIRCLKWYMDCSAELIRQDHIQEAMRALEYLFKFIVQSRILYSRATCGMEEEQFRSSIQELFQSIRFVLSLDSRNSETLLFTQAALLNSFPTIFDELLQMFTVQEVAEFVRGTLGSMPSTVHIGQSMDVVKLQSIARTVDSRLFSFSESRRILLPVVLHHIHLHLRQQKELLICSGILGSIFSIVKTSSLEADVMEEVEMMVESLLDVLLQTLLTIMSKSHAQEAVRGHCPVTAEITGEYVSCLLSLLRQMCDTHFQHLLDNFQSKDELKEFLLKIFCVFRNLMKMSVFPRDWMVMRLLTSNIIVTTVQYLSSALHKNFTETDFDFKVWNSYFSLAVLFINQPSLQLEIITSAKRKKILDKYGDMRVMMAYELFSMWQNLGEHKIHFIPGMIGPFLGVTLVPQPEVRNIMIPIFHDMMDWEQRKNGNFKQVEAELIDKLDSMVSEGKGDESYRELFGLLTQLFGPYPSLLEKVEQETWRETGISFVTSVTRLMERLLDYRDCMKGEETENKKVGCTVNLMNFYKSEINKEEMYIRYIHKLCDMHLQAENYTEAAFTLLLYCELLQWEDRPLREFLHYPSQTEWQRKEGLCRKIIHYFNKGKSWEFGIPLCRELACQYESLYDYQSLSWIRKMEASYYDNIIEQQRLEPEFFRVGFYGRKFPFFLRNKEYVCRGHDYERLEAFQQRMLSEFPQAVAMQHPNHPDDAILQCDAQYLQIYAVTPIPDYVDVLQMDRVPDRVKSFYRVNNVRKFRYDRPFHKGPKDKDNEFKSLWIERTTLTLTHSLPGISRWFEVERRELVEVSPLENAIQVVENKNQELRALISQYQHKQVHGNINLLSMCLNGVIDAAVNGGIARYQEAFFDKDYITKHPGDAEKISQLKELMQEQVHVLGVGLAVHEKFVHPEMRPLHKKLIDQFQMMRASLYHEFPGLDKLSPACSGTSTPRGNVLASHSPMSPENIKMTHRHSPMNLMGTGRHSSSSLSSHASSEAGNMMMMGDNSMGEAPEDLYHHMQLAYHNPRYQGSVTNVSVLSSSQASPSSSSLSSTHSAPSQMITSAPSSTRGSPSLPDKYRHAREMMLLLPTHRDRPSSAMYPAAILENGQPPNFQRALFQQVVGACKPCSDPNLSMAEKGHYSLHFDAFHHPLGDTPPALPARTLRKSPLHPIPASPTSPQSGLDGSNSTLSGSASSGVSSLSESNFGHSSEAPPRTDTMDSMPSQAWNGDEGLEPPYLPVHYSLSESAVLDAIKSQPCRSHSAPGCVLPQDPMDPPALPPKPYHPRLPALEHDEGMLLREEAERPRGLHRKASLPPGSVKEEQARLAWEHGRGEQ.

The 62-residue stretch at 6–67 folds into the SH3 domain; it reads EEEKYGVVIC…PANYIHLKKA (62 aa). In terms of domain architecture, C2 DOCK-type spans 421–598; the sequence is RNDLYLTLEK…ESFFISTQLS (178 aa). Residues 1225-1632 form the DOCKER domain; sequence KSEINKEEMY…LYHEFPGLDK (408 aa). Phosphoserine is present on Ser-1655. Disordered stretches follow at residues 1672–1695, 1731–1768, 1846–1925, and 1971–2027; these read GTGR…MMMM, SSSQ…SLPD, DTPP…DEGL, and PPKP…RGEQ. Composition is skewed to low complexity over residues 1676-1695 and 1731-1751; these read HSSS…MMMM and SSSQ…APSQ. Positions 1752 to 1763 are enriched in polar residues; the sequence is MITSAPSSTRGS. Positions 1877–1899 are enriched in low complexity; the sequence is GSNSTLSGSASSGVSSLSESNFG. An SH3-binding motif is present at residues 1967-1973; sequence PPALPPK. 2 stretches are compositionally biased toward basic and acidic residues: residues 1981 to 1998 and 2011 to 2027; these read ALEH…ERPR and VKEE…RGEQ.

Belongs to the DOCK family. As to quaternary structure, interacts with presenilin proteins PSEN1 and PSEN2. Interacts with CRK. In terms of tissue distribution, expressed in brain, spinal cord, pituitary gland, testis. Not expressed in heart, liver, kidney, spleen and lung. In brain, it is highly expressed in the cerebral cortex and hippocampus, while it is absent in other tissues, except in spinal cord. In the cerebral cortex, it is found within the intermediate (III and IV) and deep (V and VI) layers, whereas it is weakly expressed in superficial layer I. It is also abundant in the piriform cortex. Within the hippocampus, it is expressed in the pyramidal neurons of the CA1, CA2, and CA3 regions and the dentate gyrus.

It is found in the cytoplasm. Functionally, potential guanine nucleotide exchange factor (GEF). GEF proteins activate some small GTPases by exchanging bound GDP for free GTP. Its interaction with presenilin proteins as well as its ability to stimulate Tau/MAPT phosphorylation suggest that it may be involved in Alzheimer disease. Ectopic expression in nerve cells decreases the secretion of amyloid-beta APBA1 protein and lowers the rate of cell-substratum adhesion, suggesting that it may affect the function of some small GTPase involved in the regulation of actin cytoskeleton or cell adhesion receptors. The sequence is that of Dedicator of cytokinesis protein 3 (Dock3) from Mus musculus (Mouse).